The primary structure comprises 232 residues: Phosphatidylserine decarboxylase proenzyme (232 aa).

The Schiff-base intermediate with substrate; via pyruvic acid role is filled by S190. A Pyruvic acid (Ser); by autocatalysis modification is found at S190.

The protein belongs to the phosphatidylserine decarboxylase family. PSD-A subfamily. Heterodimer of a large membrane-associated beta subunit and a small pyruvoyl-containing alpha subunit. Pyruvate serves as cofactor. Is synthesized initially as an inactive proenzyme. Formation of the active enzyme involves a self-maturation process in which the active site pyruvoyl group is generated from an internal serine residue via an autocatalytic post-translational modification. Two non-identical subunits are generated from the proenzyme in this reaction, and the pyruvate is formed at the N-terminus of the alpha chain, which is derived from the carboxyl end of the proenzyme. The post-translation cleavage follows an unusual pathway, termed non-hydrolytic serinolysis, in which the side chain hydroxyl group of the serine supplies its oxygen atom to form the C-terminus of the beta chain, while the remainder of the serine residue undergoes an oxidative deamination to produce ammonia and the pyruvoyl prosthetic group on the alpha chain.

Its subcellular location is the cell membrane. The enzyme catalyses a 1,2-diacyl-sn-glycero-3-phospho-L-serine + H(+) = a 1,2-diacyl-sn-glycero-3-phosphoethanolamine + CO2. It participates in phospholipid metabolism; phosphatidylethanolamine biosynthesis; phosphatidylethanolamine from CDP-diacylglycerol: step 2/2. In terms of biological role, catalyzes the formation of phosphatidylethanolamine (PtdEtn) from phosphatidylserine (PtdSer). This chain is Phosphatidylserine decarboxylase proenzyme, found in Rhodopseudomonas palustris (strain BisB18).